Reading from the N-terminus, the 357-residue chain is Anthranilate phosphoribosyltransferase (357 aa).

5-phospho-alpha-D-ribose 1-diphosphate is bound by residues glycine 91, 94-95, threonine 99, 101-104, 119-127, and serine 131; these read GD, NIST, and KHGNRSVSS. Anthranilate is bound at residue glycine 91. Serine 103 is a Mg(2+) binding site. Asparagine 122 contacts anthranilate. Arginine 177 contacts anthranilate. Residues aspartate 235 and glutamate 236 each contribute to the Mg(2+) site.

This sequence belongs to the anthranilate phosphoribosyltransferase family. As to quaternary structure, homodimer. The cofactor is Mg(2+).

The catalysed reaction is N-(5-phospho-beta-D-ribosyl)anthranilate + diphosphate = 5-phospho-alpha-D-ribose 1-diphosphate + anthranilate. It participates in amino-acid biosynthesis; L-tryptophan biosynthesis; L-tryptophan from chorismate: step 2/5. Functionally, catalyzes the transfer of the phosphoribosyl group of 5-phosphorylribose-1-pyrophosphate (PRPP) to anthranilate to yield N-(5'-phosphoribosyl)-anthranilate (PRA). In Shewanella baltica (strain OS195), this protein is Anthranilate phosphoribosyltransferase.